The chain runs to 33 residues: Pardaxin P-1 (33 aa).

This sequence belongs to the pardaxin family. In terms of assembly, in aqueous solution exists as a tetramer.

The protein localises to the secreted. It is found in the target cell membrane. Functionally, exhibits unusual shark repellent and surfactant properties. Forms voltage-dependent, ion-permeable channels in membranes. At high concentration causes cell membrane lysis. Causes death in killfish oryzias latipes in 30 minutes at a concentration of 25 micrograms/ml. This Pardachirus pavoninus (Peacock sole) protein is Pardaxin P-1.